The sequence spans 415 residues: Queuine tRNA-ribosyltransferase accessory subunit 2 (415 aa).

4 residues coordinate Zn(2+): C351, C353, C356, and H382.

The protein belongs to the queuine tRNA-ribosyltransferase family. QTRT2 subfamily. As to quaternary structure, heterodimer of a catalytic subunit QTRT1 and an accessory subunit QTRT2. The cofactor is Zn(2+).

It is found in the cytoplasm. The protein localises to the mitochondrion outer membrane. Non-catalytic subunit of the queuine tRNA-ribosyltransferase (TGT) that catalyzes the base-exchange of a guanine (G) residue with queuine (Q) at position 34 (anticodon wobble position) in tRNAs with GU(N) anticodons (tRNA-Asp, -Asn, -His and -Tyr), resulting in the hypermodified nucleoside queuosine (7-(((4,5-cis-dihydroxy-2-cyclopenten-1-yl)amino)methyl)-7-deazaguanosine). This Homo sapiens (Human) protein is Queuine tRNA-ribosyltransferase accessory subunit 2.